The primary structure comprises 137 residues: UBAP1-MVB12-associated (UMA)-domain containing protein 1 (137 aa).

A disordered region spans residues 1-72 (MFHFFRKPPE…VSDPEMENKA (72 aa)). Residues 32 to 44 (DEQRMTARGKTSD) are compositionally biased toward basic and acidic residues. Residues 50-63 (PLETNKENSSSVTV) show a composition bias toward polar residues. The UMA domain maps to 86–134 (LSDVPFTLAPHVLAVQGTITDLPDHLLSYDGSENLSRFWYDFTLENSVL).

The protein is UBAP1-MVB12-associated (UMA)-domain containing protein 1 of Homo sapiens (Human).